We begin with the raw amino-acid sequence, 395 residues long: Dual specificity protein phosphatase 4 (395 aa).

An N-acetylvaline modification is found at valine 2. The Rhodanese domain maps to 42 to 160 (SGGKCLLLDC…FSSEYPEFCS (119 aa)). Positions 196 to 337 (GPVEILPFLY…LLQFESQVLT (142 aa)) constitute a Tyrosine-protein phosphatase domain. Cysteine 281 acts as the Phosphocysteine intermediate in catalysis. A phosphoserine; by MAPK mark is found at serine 387 and serine 392.

It belongs to the protein-tyrosine phosphatase family. Non-receptor class dual specificity subfamily. Hollow spherical complex composed of 24 subunits with pseudooctahedral symmetry, has a tetramer as the basic unit. Post-translationally, phosphorylation in the C-terminus by ERK1/2 inhibits proteasomal degradation and stabilizes the protein. Expressed at moderate levels in nearly all tissues and cells including brain, spleen, and testes with the higher expression in the heart and lung and lower expression in skeletal muscle and kidney. Undetectable in liver. Expressed in many areas of the brain with very strong expression in the hippocampus, piriform cortex, and the suprachiasmatic nucleus.

The protein localises to the nucleus. The enzyme catalyses O-phospho-L-tyrosyl-[protein] + H2O = L-tyrosyl-[protein] + phosphate. The catalysed reaction is O-phospho-L-seryl-[protein] + H2O = L-seryl-[protein] + phosphate. It catalyses the reaction O-phospho-L-threonyl-[protein] + H2O = L-threonyl-[protein] + phosphate. In terms of biological role, regulates mitogenic signal transduction by dephosphorylating both Thr and Tyr residues on MAP kinases ERK1 and ERK2. This Rattus norvegicus (Rat) protein is Dual specificity protein phosphatase 4 (Dusp4).